A 146-amino-acid polypeptide reads, in one-letter code: MKVLLIKDVKGLGKAGEIKNAKDGYARNFLIPKGFAKLATDDVIKEWQEEQKRKEEELKKELAELNELKEKIESVTLHIKHKLGANGQLYGAITNKEVAEHLKEHGIEIDKKHIDMKQIKTVGEYTVDVKLGHGIHAKLKIVVEGE.

This sequence belongs to the bacterial ribosomal protein bL9 family.

Functionally, binds to the 23S rRNA. This Nautilia profundicola (strain ATCC BAA-1463 / DSM 18972 / AmH) protein is Large ribosomal subunit protein bL9.